The following is a 1034-amino-acid chain: Glycine dehydrogenase (decarboxylating), mitochondrial (1034 aa).

The transit peptide at 1 to 63 directs the protein to the mitochondrion; it reads MERARRLAML…LNGFGSQVRT (63 aa). Lysine 770 carries the N6-(pyridoxal phosphate)lysine modification.

This sequence belongs to the GcvP family. In terms of assembly, homodimer. The glycine cleavage system is composed of four proteins: P, T, L and H. The cofactor is pyridoxal 5'-phosphate.

It localises to the mitochondrion. The enzyme catalyses N(6)-[(R)-lipoyl]-L-lysyl-[glycine-cleavage complex H protein] + glycine + H(+) = N(6)-[(R)-S(8)-aminomethyldihydrolipoyl]-L-lysyl-[glycine-cleavage complex H protein] + CO2. In terms of biological role, the glycine cleavage system catalyzes the degradation of glycine. The P protein binds the alpha-amino group of glycine through its pyridoxal phosphate cofactor; CO(2) is released and the remaining methylamine moiety is then transferred to the lipoamide cofactor of the H protein. In Flaveria trinervia (Clustered yellowtops), this protein is Glycine dehydrogenase (decarboxylating), mitochondrial (GDCSPA).